The following is a 322-amino-acid chain: Aldo-keto reductase family 1 member C23 (322 aa).

20–24 lines the NADP(+) pocket; the sequence is GFGTY. A substrate-binding site is contributed by K31. Residue D50 coordinates NADP(+). The active-site Proton donor is Y55. H117 lines the substrate pocket. NADP(+) is bound by residues 166-167, Q190, 216-221, and 269-279; these read SN, YSALGS, and KSYNEKRIKEN.

The protein belongs to the aldo/keto reductase family. Monomer. Detected in follicle granulosa cells (at protein level). Detected in heart, lung, liver, kidney, stomach, uterus, testis, skeletal muscle and granulosa cells of the follicle wall.

The protein resides in the cytoplasm. Its function is as follows. NADP-dependent oxidoreductase that has 20-alpha-hydroxysteroid dehydrogenase activity. The protein is Aldo-keto reductase family 1 member C23 (AKR1C23) of Equus caballus (Horse).